Here is a 547-residue protein sequence, read N- to C-terminus: Phosphoethanolamine transferase EptA (547 aa).

Over 1–9 the chain is Cytoplasmic; the sequence is MLKRLLKRP. The helical transmembrane segment at 10 to 30 threads the bilayer; it reads SLNLLAWLLLAAFYISICLNI. Over 31–47 the chain is Periplasmic; it reads AFFKQVLQALPLDSLHN. A helical transmembrane segment spans residues 48-68; that stretch reads VLVFLSMPVVAFSVINIVLTL. Over 69–79 the chain is Cytoplasmic; the sequence is SSFLWLNRPLA. The chain crosses the membrane as a helical span at residues 80–100; the sequence is CLFILVGAAAQYFIMTYGIVI. Residues 101–123 lie on the Periplasmic side of the membrane; sequence DRSMIANIIDTTPAESYALMTPQ. The chain crosses the membrane as a helical span at residues 124-144; it reads MLLTLGFSGVLAALIACWIKI. The Cytoplasmic portion of the chain corresponds to 145-154; that stretch reads KPATSRLRSV. The chain crosses the membrane as a helical span at residues 155–175; that stretch reads LFRGANILVSVLLILLVAALF. Topologically, residues 176–547 are periplasmic; the sequence is YKDYASLFRN…ILQTCRRVSE (372 aa).

The protein belongs to the phosphoethanolamine transferase family. EptA subfamily. Has been isolated as a 91 kDa complex containing ZipA-EptA and an unidentified 24 kDa protein.

The protein localises to the cell inner membrane. Catalyzes the addition of a phosphoethanolamine moiety to the lipid A. The phosphoethanolamine modification is required for resistance to polymyxin. The sequence is that of Phosphoethanolamine transferase EptA (eptA) from Escherichia coli (strain K12).